Consider the following 254-residue polypeptide: MGRVIRNQRKGAGSIFTSHTRLRQGAAKLRTLDYAERHGYIRGVVKQIVHDAGRGAPLAKVVFRDPYKYKLREEIFIANEGVHTGQFIYAGKKASLNVGNVLPLGSVPEGTIVSNVEEKPGDRGALARASGNYVIIIGHNPDENKTRVRLPSGAKKIISSDARGVIGVIAGGGRTDKPLLKAGRAFHKYKLKRNSWPKTRGVAMNPVDHPHGGGNHQHIGKASTISRGAVSGQKAGLIAARRTGLLRGSQKTQD.

The protein belongs to the universal ribosomal protein uL2 family.

The sequence is that of Large ribosomal subunit protein uL2 (RPL2) from Candida glabrata (strain ATCC 2001 / BCRC 20586 / JCM 3761 / NBRC 0622 / NRRL Y-65 / CBS 138) (Yeast).